A 35-amino-acid polypeptide reads, in one-letter code: Photosystem II reaction center protein T (35 aa).

The helical transmembrane segment at 3–23 threads the bilayer; that stretch reads SVAYILIFTLCIGTIFFAIAF.

This sequence belongs to the PsbT family. PSII is composed of 1 copy each of membrane proteins PsbA, PsbB, PsbC, PsbD, PsbE, PsbF, PsbH, PsbI, PsbJ, PsbK, PsbL, PsbM, PsbT, PsbX, PsbY, PsbZ, Psb30/Ycf12, peripheral proteins PsbO, CyanoQ (PsbQ), PsbU, PsbV and a large number of cofactors. It forms dimeric complexes.

The protein localises to the cellular thylakoid membrane. Functionally, found at the monomer-monomer interface of the photosystem II (PS II) dimer, plays a role in assembly and dimerization of PSII. PSII is a light-driven water plastoquinone oxidoreductase, using light energy to abstract electrons from H(2)O, generating a proton gradient subsequently used for ATP formation. The polypeptide is Photosystem II reaction center protein T (Nostoc punctiforme (strain ATCC 29133 / PCC 73102)).